The primary structure comprises 440 residues: Thymidine phosphorylase (440 aa).

Belongs to the thymidine/pyrimidine-nucleoside phosphorylase family. Homodimer.

The catalysed reaction is thymidine + phosphate = 2-deoxy-alpha-D-ribose 1-phosphate + thymine. The protein operates within pyrimidine metabolism; dTMP biosynthesis via salvage pathway; dTMP from thymine: step 1/2. The enzymes which catalyze the reversible phosphorolysis of pyrimidine nucleosides are involved in the degradation of these compounds and in their utilization as carbon and energy sources, or in the rescue of pyrimidine bases for nucleotide synthesis. In Klebsiella pneumoniae subsp. pneumoniae (strain ATCC 700721 / MGH 78578), this protein is Thymidine phosphorylase.